We begin with the raw amino-acid sequence, 452 residues long: Putative zinc metalloprotease VC_2253 (452 aa).

Zn(2+) is bound at residue histidine 22. Glutamate 23 is an active-site residue. Histidine 26 contributes to the Zn(2+) binding site. Residues serine 98–phenylalanine 120 form a helical membrane-spanning segment. Residues asparagine 197–serine 292 enclose the PDZ domain. 2 helical membrane passes run phenylalanine 378–leucine 400 and methionine 428–asparagine 447.

It belongs to the peptidase M50B family. Zn(2+) serves as cofactor.

It localises to the cell inner membrane. The sequence is that of Putative zinc metalloprotease VC_2253 from Vibrio cholerae serotype O1 (strain ATCC 39315 / El Tor Inaba N16961).